The chain runs to 197 residues: Segregation and condensation protein B (197 aa).

The protein belongs to the ScpB family. As to quaternary structure, homodimer. Homodimerization may be required to stabilize the binding of ScpA to the Smc head domains. Component of a cohesin-like complex composed of ScpA, ScpB and the Smc homodimer, in which ScpA and ScpB bind to the head domain of Smc. The presence of the three proteins is required for the association of the complex with DNA.

The protein resides in the cytoplasm. In terms of biological role, participates in chromosomal partition during cell division. May act via the formation of a condensin-like complex containing Smc and ScpA that pull DNA away from mid-cell into both cell halves. The polypeptide is Segregation and condensation protein B (Syntrophotalea carbinolica (strain DSM 2380 / NBRC 103641 / GraBd1) (Pelobacter carbinolicus)).